Consider the following 918-residue polypeptide: Importin subunit beta-2 (918 aa).

HEAT repeat units lie at residues 11–38, 43–92, 103–137, 145–181, 190–222, 235–263, 275–303, 320–413, 421–449, 461–488, 501–534, 542–577, 583–620, 628–678, 694–725, 777–814, 825–858, and 867–900; these read YVLQ…EAME, QPEF…GGNN, YVKS…TYYR, GLQM…FQLE, EALL…TVIP, FLEI…SFLL, DGIV…FLHA, KDIV…MTNI, IAFP…GAMA, PALI…TLSR, LIPV…IENA, LFYS…AEKC, AMQI…SSLG, PEVY…GLGA, ILKI…YFFN, IDMS…LTHP, DSNW…INLT, and DTIH…SAQI. Residues 361 to 395 are disordered; sequence APRIVKKKEAGNGEDADDNEDDDDDDDDEDGDVDT. A compositionally biased stretch (acidic residues) spans 372–393; the sequence is NGEDADDNEDDDDDDDDEDGDV.

It belongs to the importin beta family. Importin beta-2 subfamily. As to quaternary structure, interacts with Ran (GSP1); interacts specifically with the GTP-bound form of Ran (GTP-Ran), protecting it from GTP hydrolysis and nucleotide exchange. Interacts with nucleoporins NUP1, NUP100 and NUP116. Interacts with NAB2 and HRP1/NAB4; via their rg-NLS. Interacts with TFG2; via its PY-NLS.

Its subcellular location is the cytoplasm. The protein localises to the nucleus. It localises to the nuclear pore complex. Its function is as follows. Functions in nuclear protein import as nuclear transport receptor. Serves as receptor for arginine/glycine-rich nuclear localization signals (rg-NLS) and PY-NLS in cargo substrates. Its predominant cargo substrate seems to be mRNA-binding proteins. Required for nuclear transport of NAB2, HRP1/NAB4 and TFG2. Mediates docking of the importin/substrate complex to the nuclear pore complex (NPC) through binding to repeat-containing nucleoporins. The complex is subsequently translocated through the pore by an energy requiring, Ran-dependent mechanism. At the nucleoplasmic side of the NPC, GTP-Ran binding leads to release of the cargo. Efficient GTP-Ran-mediated substrate release requires RNA. The importin is re-exported from the nucleus to the cytoplasm where GTP hydrolysis releases Ran from importin. The directionality of nuclear import is thought to be conferred by an asymmetric distribution of the GTP- and GDP-bound forms of Ran between the cytoplasm and nucleus. This Saccharomyces cerevisiae (strain ATCC 204508 / S288c) (Baker's yeast) protein is Importin subunit beta-2.